We begin with the raw amino-acid sequence, 834 residues long: Serine/threonine-protein kinase TNNI3K (834 aa).

A lipid anchor (N-myristoyl glycine) is attached at Gly-2. A coiled-coil region spans residues 21 to 49; that stretch reads SESYAIIIERLEDDLQIKENEFQELRHIF. 10 ANK repeats span residues 66 to 96, 100 to 129, 133 to 162, 166 to 195, 199 to 229, 233 to 262, 268 to 297, 303 to 334, 338 to 367, and 380 to 409; these read RGLS…RPSR, NGFP…DVQQ, GGLT…NVNV, VFFT…DVNV, VGDR…DVNA, EDHV…EVQP, YGDT…TESL, FSET…NINH, DGHT…DMNL, and DEQT…PQDE. Residues 462–722 enclose the Protein kinase domain; it reads IEFHEIIGSG…EVVRKLEECL (261 aa). Residues 468–476 and Lys-489 each bind ATP; that span reads IGSGSFGKV. Asp-587 (proton acceptor) is an active-site residue. Positions 815–834 are disordered; it reads PMSPMHLHSRRNSGSFEDGN.

Belongs to the protein kinase superfamily. TKL Ser/Thr protein kinase family. MAP kinase kinase kinase subfamily. Interacts with TNNI3, ACTC, ACTA1, MYBPC3, AIP, FABP3 and HADHB. Requires Mg(2+) as cofactor. Post-translationally, autophosphorylated.

It is found in the nucleus. Its subcellular location is the cytoplasm. The enzyme catalyses L-seryl-[protein] + ATP = O-phospho-L-seryl-[protein] + ADP + H(+). It carries out the reaction L-threonyl-[protein] + ATP = O-phospho-L-threonyl-[protein] + ADP + H(+). May play a role in cardiac physiology. This Mus musculus (Mouse) protein is Serine/threonine-protein kinase TNNI3K.